A 458-amino-acid chain; its full sequence is tRNA modification GTPase MnmE (458 aa).

(6S)-5-formyl-5,6,7,8-tetrahydrofolate is bound by residues R23, E80, and K122. The region spanning 218–380 (GMKIVIAGRP…LREHLQQTMG (163 aa)) is the TrmE-type G domain. N228 provides a ligand contact to K(+). GTP-binding positions include 228 to 233 (NVGKSS), 247 to 253 (TQIPGTT), 272 to 275 (DTAG), and 361 to 363 (SAR). Residue S232 coordinates Mg(2+). Positions 247, 249, and 252 each coordinate K(+). T253 serves as a coordination point for Mg(2+). K458 serves as a coordination point for (6S)-5-formyl-5,6,7,8-tetrahydrofolate.

Belongs to the TRAFAC class TrmE-Era-EngA-EngB-Septin-like GTPase superfamily. TrmE GTPase family. As to quaternary structure, homodimer. Heterotetramer of two MnmE and two MnmG subunits. The cofactor is K(+).

Its subcellular location is the cytoplasm. Its function is as follows. Exhibits a very high intrinsic GTPase hydrolysis rate. Involved in the addition of a carboxymethylaminomethyl (cmnm) group at the wobble position (U34) of certain tRNAs, forming tRNA-cmnm(5)s(2)U34. In Hamiltonella defensa subsp. Acyrthosiphon pisum (strain 5AT), this protein is tRNA modification GTPase MnmE.